Consider the following 315-residue polypeptide: Calumenin (315 aa).

The N-terminal stretch at 1–19 is a signal peptide; it reads MDLRQFLMCLSLCTAFALS. S44 carries the phosphoserine modification. At Y47 the chain carries Phosphotyrosine. A Phosphothreonine modification is found at T65. EF-hand domains are found at residues 68–103, 104–139, 151–186, 188–223, 229–264, and 265–300; these read ESKERLGKIVSKIDGDKDGFVTVDELKDWIKFAQKR, WIYEDVERQWKGHDLNEDGLVSWEEYKNATYGYVLD, QMMVRDERRFKMADKDGDLIATKEEFTAFLHPEEYD, MKDIVVQETMEDIDKNADGFIDLEEYIGDMYSHDGN, WVKTEREQFVEFRDKNRDGKMDKEETKDWILPSDYD, and HAEAEARHLVYESDQNKDGKLTKEEIVDKYDLFVGS. The residue at position 69 (S69) is a Phosphoserine; by FAM20C. 8 residues coordinate Ca(2+): D81, D83, D85, E92, D117, N119, D121, and E128. Residue N131 is glycosylated (N-linked (GlcNAc...) (complex) asparagine). D164 serves as a coordination point for Ca(2+). Residue K165 is modified to N6-acetyllysine. The Ca(2+) site is built by D166, D168, E175, D201, N203, D205, E212, D242, N244, D246, K248, and E253. T254 is subject to Phosphothreonine. Phosphoserine occurs at positions 261 and 277. The Ca(2+) site is built by D278, N280, D282, K284, and E289. Residues 312–315 carry the Prevents secretion from ER motif; sequence HDEF.

It belongs to the CREC family. Interacts with GGCX. In terms of tissue distribution, ubiquitously expressed. Expressed at high levels in heart, placenta and skeletal muscle, at lower levels in lung, kidney and pancreas and at very low levels in brain and liver.

The protein localises to the endoplasmic reticulum membrane. It is found in the golgi apparatus. Its subcellular location is the secreted. It localises to the melanosome. The protein resides in the sarcoplasmic reticulum lumen. Involved in regulation of vitamin K-dependent carboxylation of multiple N-terminal glutamate residues. Seems to inhibit gamma-carboxylase GGCX. Binds 7 calcium ions with a low affinity. The polypeptide is Calumenin (CALU) (Homo sapiens (Human)).